A 259-amino-acid chain; its full sequence is Cytochrome c oxidase subunit 3 (259 aa).

7 helical membrane-spanning segments follow: residues 13-33 (PWPL…ASWF), 36-56 (HGFL…IQWW), 80-100 (GMIL…WAFF), 125-145 (FSVP…VTWA), 160-180 (ALIL…GEYM), 195-215 (FFVA…FLAI), and 237-257 (AWYW…IYWW).

The protein belongs to the cytochrome c oxidase subunit 3 family. As to quaternary structure, component of the cytochrome c oxidase (complex IV, CIV), a multisubunit enzyme composed of a catalytic core of 3 subunits and several supernumerary subunits. The complex exists as a monomer or a dimer and forms supercomplexes (SCs) in the inner mitochondrial membrane with ubiquinol-cytochrome c oxidoreductase (cytochrome b-c1 complex, complex III, CIII).

It localises to the mitochondrion inner membrane. It carries out the reaction 4 Fe(II)-[cytochrome c] + O2 + 8 H(+)(in) = 4 Fe(III)-[cytochrome c] + 2 H2O + 4 H(+)(out). Component of the cytochrome c oxidase, the last enzyme in the mitochondrial electron transport chain which drives oxidative phosphorylation. The respiratory chain contains 3 multisubunit complexes succinate dehydrogenase (complex II, CII), ubiquinol-cytochrome c oxidoreductase (cytochrome b-c1 complex, complex III, CIII) and cytochrome c oxidase (complex IV, CIV), that cooperate to transfer electrons derived from NADH and succinate to molecular oxygen, creating an electrochemical gradient over the inner membrane that drives transmembrane transport and the ATP synthase. Cytochrome c oxidase is the component of the respiratory chain that catalyzes the reduction of oxygen to water. Electrons originating from reduced cytochrome c in the intermembrane space (IMS) are transferred via the dinuclear copper A center (CU(A)) of subunit 2 and heme A of subunit 1 to the active site in subunit 1, a binuclear center (BNC) formed by heme A3 and copper B (CU(B)). The BNC reduces molecular oxygen to 2 water molecules using 4 electrons from cytochrome c in the IMS and 4 protons from the mitochondrial matrix. The chain is Cytochrome c oxidase subunit 3 (COIII) from Lumbricus terrestris (Common earthworm).